A 408-amino-acid chain; its full sequence is CinA-like protein (408 aa).

The protein belongs to the CinA family.

The protein is CinA-like protein of Thermotoga sp. (strain RQ2).